We begin with the raw amino-acid sequence, 506 residues long: Glutamate--tRNA ligase (506 aa).

Residues P12 to T22 carry the 'HIGH' region motif. Residues K253–R257 carry the 'KMSKS' region motif. K256 is an ATP binding site.

This sequence belongs to the class-I aminoacyl-tRNA synthetase family. Glutamate--tRNA ligase type 1 subfamily. Monomer.

It is found in the cytoplasm. The catalysed reaction is tRNA(Glu) + L-glutamate + ATP = L-glutamyl-tRNA(Glu) + AMP + diphosphate. Its function is as follows. Catalyzes the attachment of glutamate to tRNA(Glu) in a two-step reaction: glutamate is first activated by ATP to form Glu-AMP and then transferred to the acceptor end of tRNA(Glu). The protein is Glutamate--tRNA ligase of Chlamydia muridarum (strain MoPn / Nigg).